The chain runs to 458 residues: Argininosuccinate lyase (458 aa).

Belongs to the lyase 1 family. Argininosuccinate lyase subfamily.

It is found in the cytoplasm. It catalyses the reaction 2-(N(omega)-L-arginino)succinate = fumarate + L-arginine. Its pathway is amino-acid biosynthesis; L-arginine biosynthesis; L-arginine from L-ornithine and carbamoyl phosphate: step 3/3. The sequence is that of Argininosuccinate lyase from Vibrio cholerae serotype O1 (strain ATCC 39541 / Classical Ogawa 395 / O395).